Here is a 93-residue protein sequence, read N- to C-terminus: Toxin RelE1 (93 aa).

This sequence belongs to the RelE toxin family.

Functionally, toxic component of a type II toxin-antitoxin (TA) system. Its toxic effect is neutralized by coexpression with cognate antitoxin RelB1 but no other ParD or RelB antitoxin. In Caulobacter vibrioides (strain ATCC 19089 / CIP 103742 / CB 15) (Caulobacter crescentus), this protein is Toxin RelE1 (relE1).